The following is a 354-amino-acid chain: MNGTEGPAFYVPMSNATGVVRSPYEYPQYYLVAPWAYGLLAAYMFFLIITGFPVNFLTLYVTIEHKKLRTPLNYILLNLAIADLFMVFGGFTTTMYTSLHGYFVFGRLGCNLEGFFATLGGEMGLWSLVVLAIERWMVVCKPVSNFRFGENHAIMGVAFTWVMACSCAVPPLVGWSRYIPEGMQCSCGVDYYTRTPGVNNESFVIYMFIVHFFIPLIVIFFCYGRLVCTVKEAAAQQQESETTQRAEREVTRMVIIMVIAFLICWLPYAGVAWYIFTHQGSEFGPVFMTLPAFFAKTSAVYNPCIYICMNKQFRHCMITTLCCGKNPFEEEEGASTTASKTEASSVSSSSVSPA.

The Extracellular segment spans residues 1–36; the sequence is MNGTEGPAFYVPMSNATGVVRSPYEYPQYYLVAPWA. N-linked (GlcNAc...) asparagine glycans are attached at residues asparagine 2 and asparagine 15. A helical transmembrane segment spans residues 37-61; sequence YGLLAAYMFFLIITGFPVNFLTLYV. The Cytoplasmic segment spans residues 62-73; sequence TIEHKKLRTPLN. A helical transmembrane segment spans residues 74-96; that stretch reads YILLNLAIADLFMVFGGFTTTMY. Topologically, residues 97–110 are extracellular; that stretch reads TSLHGYFVFGRLGC. Cysteine 110 and cysteine 187 are oxidised to a cystine. A helical membrane pass occupies residues 111-133; sequence NLEGFFATLGGEMGLWSLVVLAI. A 'Ionic lock' involved in activated form stabilization motif is present at residues 134-136; sequence ERW. At 134-152 the chain is on the cytoplasmic side; the sequence is ERWMVVCKPVSNFRFGENH. A helical membrane pass occupies residues 153 to 173; sequence AIMGVAFTWVMACSCAVPPLV. Topologically, residues 174–202 are extracellular; that stretch reads GWSRYIPEGMQCSCGVDYYTRTPGVNNES. Residue asparagine 200 is glycosylated (N-linked (GlcNAc...) asparagine). The helical transmembrane segment at 203 to 224 threads the bilayer; it reads FVIYMFIVHFFIPLIVIFFCYG. Topologically, residues 225 to 252 are cytoplasmic; sequence RLVCTVKEAAAQQQESETTQRAEREVTR. The helical transmembrane segment at 253–274 threads the bilayer; it reads MVIIMVIAFLICWLPYAGVAWY. At 275-286 the chain is on the extracellular side; sequence IFTHQGSEFGPV. The helical transmembrane segment at 287–308 threads the bilayer; that stretch reads FMTLPAFFAKTSAVYNPCIYIC. N6-(retinylidene)lysine is present on lysine 296. At 309 to 354 the chain is on the cytoplasmic side; sequence MNKQFRHCMITTLCCGKNPFEEEEGASTTASKTEASSVSSSSVSPA. The segment at 333–354 is disordered; sequence GASTTASKTEASSVSSSSVSPA. Low complexity predominate over residues 334 to 354; sequence ASTTASKTEASSVSSSSVSPA.

Belongs to the G-protein coupled receptor 1 family. Opsin subfamily. Phosphorylated on some or all of the serine and threonine residues present in the C-terminal region. In terms of processing, contains one covalently linked retinal chromophore. As to expression, retinal rod photoreceptor cells, predominantly in the outer segments (at protein level). Retinal rod photoreceptor cells.

The protein resides in the membrane. The protein localises to the cell projection. It is found in the cilium. It localises to the photoreceptor outer segment. In terms of biological role, photoreceptor required for image-forming vision at low light intensity. While most salt water fish species use retinal as chromophore, most freshwater fish use 3-dehydroretinal, or a mixture of retinal and 3-dehydroretinal. Light-induced isomerization of 11-cis to all-trans retinal triggers a conformational change that activates signaling via G-proteins. Subsequent receptor phosphorylation mediates displacement of the bound G-protein alpha subunit by arrestin and terminates signaling. This chain is Rhodopsin (rho), found in Danio rerio (Zebrafish).